The chain runs to 425 residues: Tol-Pal system protein TolB (425 aa).

A signal peptide spans 1–22; that stretch reads MRNFLYCTGVLLLLWMSTSSQA.

The protein belongs to the TolB family. In terms of assembly, the Tol-Pal system is composed of five core proteins: the inner membrane proteins TolA, TolQ and TolR, the periplasmic protein TolB and the outer membrane protein Pal. They form a network linking the inner and outer membranes and the peptidoglycan layer.

The protein localises to the periplasm. In terms of biological role, part of the Tol-Pal system, which plays a role in outer membrane invagination during cell division and is important for maintaining outer membrane integrity. This Nitrosomonas europaea (strain ATCC 19718 / CIP 103999 / KCTC 2705 / NBRC 14298) protein is Tol-Pal system protein TolB.